Consider the following 912-residue polypeptide: Protein transport protein SEC24-2 (912 aa).

Over residues 1–11 (MSNPSRPKKRV) the composition is skewed to basic residues. 2 disordered regions span residues 1–83 (MSNP…QQIS) and 102–129 (PNAY…PGRP). Composition is skewed to polar residues over residues 33-45 (SGQT…SGSA), 53-74 (GQFT…MTPA), and 106-129 (YQPN…PGRP). Residues Cys226, Cys229, Cys248, and Cys251 each coordinate Zn(2+). A zinc finger-like region spans residues 226 to 251 (CRRCRGYLNPFVKILQVESKWRCNFC).

The protein belongs to the SEC23/SEC24 family. SEC24 subfamily. The COPII coat is composed of at least 5 proteins: the SEC23/24 complex, the SEC13/31 complex, and the protein SAR1. Golgi apparatus membrane; Peripheral membrane protein; Cytoplasmic side.

It is found in the cytoplasm. The protein localises to the cytoplasmic vesicle. It localises to the COPII-coated vesicle membrane. The protein resides in the endoplasmic reticulum membrane. Its subcellular location is the golgi apparatus membrane. Component of the coat protein complex II (COPII) which promotes the formation of transport vesicles from the endoplasmic reticulum (ER). The coat has two main functions, the physical deformation of the endoplasmic reticulum membrane into vesicles and the selection of cargo molecules. The chain is Protein transport protein SEC24-2 (SEC242) from Naumovozyma castellii (Yeast).